The following is a 610-amino-acid chain: MRVTSLLWSSLVIPAAVGFQVRFKPSEDTALDTVDDGTLQSLLDNIGLNGSNAWDTRPGLVIASPSKKDPNYFFTWTRDSALVLKCITDAFAAGNTALQETIHEYISSQARIQLLNTRSGGLSSGGLGEPKYRVDETPYNEDWGRPQADGPALRATALIAYARWLLENDYYDVAKSIVWPVVKNDLSYVSEHWNTTAFDLWEEVNSPSFFTTIVQHRALVEGINIARALDETCPHCESQAPQALCYLQSYWTGTAVRSNYGQGRSGLDVASILGSIHTFDPEGECDDTTFQPCSARALANHKAVTDSFRSIYKINGGIKQGEAVAVGRYPEDVYFNGNPWYLATYAAAEQLYDAMYQWNKIGKITVTDVSMPFFKDIYPEVQTGTHESSSPEFGNIIAAVKAYAEGYIEVAKKYTPCTGMLSEQFSRDNGTPLSVADLTWSYASYLTVMARRNSVVPASWGEKNARDIPSTCVPSSATGPYQTATITHWPPNLTPTAQPSPCPTALPTKNNVRFRLLATTQVGEDVFLVGSIPELGSWDVKKAVPLNADIYADNCHQWYVDIELPTAVAFEYKFIRKRGGEVVWEQDPNRKYTVPQTCGVSGAIKRDTWR.

The first 18 residues, 1–18 (MRVTSLLWSSLVIPAAVG), serve as a signal peptide directing secretion. A propeptide spanning residues 19 to 24 (FQVRFK) is cleaved from the precursor. N-linked (GlcNAc...) asparagine glycosylation occurs at N49. W143 is a substrate binding site. N194 is a glycosylation site (N-linked (GlcNAc...) asparagine). D199 acts as the Proton acceptor in catalysis. The active-site Proton donor is E202. 3 disulfide bridges follow: C233–C236, C245–C472, and C285–C293. The CBM20 domain maps to 504 to 610 (TALPTKNNVR…SGAIKRDTWR (107 aa)).

Belongs to the glycosyl hydrolase 15 family.

It localises to the secreted. The enzyme catalyses Hydrolysis of terminal (1-&gt;4)-linked alpha-D-glucose residues successively from non-reducing ends of the chains with release of beta-D-glucose.. The protein is Glucoamylase ARB_02327-1 of Arthroderma benhamiae (strain ATCC MYA-4681 / CBS 112371) (Trichophyton mentagrophytes).